Here is a 99-residue protein sequence, read N- to C-terminus: Aspartyl/glutamyl-tRNA(Asn/Gln) amidotransferase subunit C (99 aa).

It belongs to the GatC family. In terms of assembly, heterotrimer of A, B and C subunits.

It carries out the reaction L-glutamyl-tRNA(Gln) + L-glutamine + ATP + H2O = L-glutaminyl-tRNA(Gln) + L-glutamate + ADP + phosphate + H(+). The enzyme catalyses L-aspartyl-tRNA(Asn) + L-glutamine + ATP + H2O = L-asparaginyl-tRNA(Asn) + L-glutamate + ADP + phosphate + 2 H(+). Functionally, allows the formation of correctly charged Asn-tRNA(Asn) or Gln-tRNA(Gln) through the transamidation of misacylated Asp-tRNA(Asn) or Glu-tRNA(Gln) in organisms which lack either or both of asparaginyl-tRNA or glutaminyl-tRNA synthetases. The reaction takes place in the presence of glutamine and ATP through an activated phospho-Asp-tRNA(Asn) or phospho-Glu-tRNA(Gln). The chain is Aspartyl/glutamyl-tRNA(Asn/Gln) amidotransferase subunit C from Burkholderia vietnamiensis (strain G4 / LMG 22486) (Burkholderia cepacia (strain R1808)).